Here is a 262-residue protein sequence, read N- to C-terminus: Acyl-[acyl-carrier-protein]--UDP-N-acetylglucosamine O-acyltransferase (262 aa).

The protein belongs to the transferase hexapeptide repeat family. LpxA subfamily. In terms of assembly, homotrimer.

It is found in the cytoplasm. The catalysed reaction is a (3R)-hydroxyacyl-[ACP] + UDP-N-acetyl-alpha-D-glucosamine = a UDP-3-O-[(3R)-3-hydroxyacyl]-N-acetyl-alpha-D-glucosamine + holo-[ACP]. The protein operates within glycolipid biosynthesis; lipid IV(A) biosynthesis; lipid IV(A) from (3R)-3-hydroxytetradecanoyl-[acyl-carrier-protein] and UDP-N-acetyl-alpha-D-glucosamine: step 1/6. In terms of biological role, involved in the biosynthesis of lipid A, a phosphorylated glycolipid that anchors the lipopolysaccharide to the outer membrane of the cell. This chain is Acyl-[acyl-carrier-protein]--UDP-N-acetylglucosamine O-acyltransferase, found in Yersinia pseudotuberculosis serotype O:1b (strain IP 31758).